We begin with the raw amino-acid sequence, 56 residues long: uncharacterized protein (56 aa).

This is an uncharacterized protein from Streptomyces lividans.